We begin with the raw amino-acid sequence, 221 residues long: MDIFKYDVYRGPNIGIYTSANDEKIFLPRGFAKAKAARLEGYLGAEALYTSVANTRLMGTLMVLNNSGIIMPSTISEIEYEFYKKHTDLNVVVLDTKFTALGNMISVNDRGGVVSPVFPREEVRIIADALGIEVIQRRIAGYNQVGAMMVATSGGGIIHPETDGEDVKRISEVMGVHMEPATINGGIPFVSSGLLANKKSVVAGSFTSGPEIMMLTRAFAG.

The protein belongs to the eIF-6 family.

Its function is as follows. Binds to the 50S ribosomal subunit and prevents its association with the 30S ribosomal subunit to form the 70S initiation complex. This chain is Translation initiation factor 6, found in Cenarchaeum symbiosum (strain A).